The chain runs to 1316 residues: DNA-directed RNA polymerase subunit beta' (1316 aa).

Zn(2+) contacts are provided by cysteine 60, cysteine 62, cysteine 75, and cysteine 78. Mg(2+) is bound by residues aspartate 535, aspartate 537, and aspartate 539. Positions 891, 968, 975, and 978 each coordinate Zn(2+).

Belongs to the RNA polymerase beta' chain family. As to quaternary structure, the RNAP catalytic core consists of 2 alpha, 1 beta, 1 beta' and 1 omega subunit. When a sigma factor is associated with the core the holoenzyme is formed, which can initiate transcription. Mg(2+) is required as a cofactor. It depends on Zn(2+) as a cofactor.

It catalyses the reaction RNA(n) + a ribonucleoside 5'-triphosphate = RNA(n+1) + diphosphate. DNA-dependent RNA polymerase catalyzes the transcription of DNA into RNA using the four ribonucleoside triphosphates as substrates. The polypeptide is DNA-directed RNA polymerase subunit beta' (Mycobacterium ulcerans (strain Agy99)).